Reading from the N-terminus, the 199-residue chain is 3-isopropylmalate dehydratase small subunit (199 aa).

This sequence belongs to the LeuD family. LeuD type 1 subfamily. Heterodimer of LeuC and LeuD.

The catalysed reaction is (2R,3S)-3-isopropylmalate = (2S)-2-isopropylmalate. It functions in the pathway amino-acid biosynthesis; L-leucine biosynthesis; L-leucine from 3-methyl-2-oxobutanoate: step 2/4. Catalyzes the isomerization between 2-isopropylmalate and 3-isopropylmalate, via the formation of 2-isopropylmaleate. The sequence is that of 3-isopropylmalate dehydratase small subunit from Bacillus pumilus (strain SAFR-032).